A 440-amino-acid polypeptide reads, in one-letter code: KH domain-containing protein 3 (440 aa).

The involved in RNA binding stretch occupies residues 1 to 39; it reads MASLKRFQTLVPLDHKQGTLFEIIGEPKLPKWFHVECLE. Residues 40–118 form the KH; atypical domain; sequence DPKRLYVEPR…CRMKLMEIEA (79 aa). The segment at 132–201 is disordered; the sequence is KAATQPAPVK…EVREAATEQA (70 aa). Residue Ser151 is modified to Phosphoserine; by ATR. 2 positions are modified to phosphothreonine: Thr274 and Thr286. Positions 341–440 are required for interaction with NUMA1 and regulation of apoptosis in response to DNA damage; sequence VREAATQLSP…RDAWESFIIL (100 aa). Ser349 is subject to Phosphoserine.

Belongs to the KHDC1 family. Component of the subcortical maternal complex (SCMC), at least composed of NLRP5, KHDC3, OOEP, and TLE6. Within the complex, interacts with NLRP5, OOEP and TLE6. The SCMC may facilitate translocation of its components between the nuclear and cytoplasmic compartments. Forms a scaffold complex with OOEP/FLOPED, and interacts with BLM and TRIM25 at DNA replication forks. Interacts with PARP1; the interaction is increased following the formation of DNA double-strand breaks. Interacts (via C-terminus) with NUMA1. In terms of processing, phosphorylation at Ser-151 is required to promote stalled fork restart. Detected in ovary, but not in testis or somatic tissues. In the ovary, expressed in growing oocytes.

It localises to the cytoplasm. Its subcellular location is the cell cortex. It is found in the nucleus. The protein resides in the mitochondrion. The protein localises to the cytoskeleton. It localises to the microtubule organizing center. Its subcellular location is the centrosome. It is found in the chromosome. Component of the subcortical maternal complex (SCMC), a multiprotein complex that plays a key role in early embryonic development. The SCMC complex is a structural constituent of cytoplasmic lattices, which consist in fibrous structures found in the cytoplasm of oocytes and preimplantation embryos. They are required to store maternal proteins critical for embryonic development, such as proteins that control epigenetic reprogramming of the preimplantation embryo, and prevent their degradation or activation. KHDC3 ensures proper spindle assembly by regulating the localization of AURKA via RHOA signaling and of PLK1 via a RHOA-independent process. Required for the localization of MAD2L1 to kinetochores to enable spindle assembly checkpoint function. As part of the OOEP-KHDC3 scaffold, recruits BLM and TRIM25 to DNA replication forks, thereby promoting the ubiquitination of BLM by TRIM25, enhancing BLM retainment at replication forks and therefore promoting stalled replication fork restart. Regulates homologous recombination-mediated DNA repair via recruitment of RAD51 to sites of DNA double-strand breaks, and sustainment of PARP1 activity, which in turn modulates downstream ATM or ATR activation. Activation of ATM or ATR in response to DNA double-strand breaks may be cell-type specific. Its role in DNA double-strand break repair is independent of its role in restarting stalled replication forks. Promotes neural stem cell neurogenesis and neuronal differentiation in the hippocampus. May regulate normal development of learning, memory and anxiety. Capable of binding RNA. In Mus musculus (Mouse), this protein is KH domain-containing protein 3.